The primary structure comprises 202 residues: Transmembrane 4 L6 family member 4 (202 aa).

The Cytoplasmic portion of the chain corresponds to 1–9 (MCTGGCARC). The chain crosses the membrane as a helical span at residues 10 to 30 (LGGTLIPLAVFAVLANILLFF). Topologically, residues 31–48 (PGGKVVDDNSHLSDEVWY) are extracellular. Residues 49–69 (FGGILGSGVLMIFPALVFLGL) traverse the membrane as a helical segment. The Cytoplasmic segment spans residues 70–93 (QNNDCCGCCGNESCGKRFAMFTST). Residues 94 to 114 (LFAVVGFLGAAYSFIVSAVSI) traverse the membrane as a helical segment. The Extracellular portion of the chain corresponds to 115–158 (NKGPKCFMTNNTWGYPFHDGDYLNDQALWSKCEEPRDVVPWNLT). N156 carries an N-linked (GlcNAc...) asparagine glycan. Residues 159–179 (LFSILLVIGGIQMVLCAIQVI) traverse the membrane as a helical segment. Over 180 to 202 (NGLLGTLCGDCQCCGCCGGDRPV) the chain is Cytoplasmic.

Belongs to the L6 tetraspanin family. As to expression, expressed in liver and testis. Up-regulated in regenerating liver after partial hepatectomy.

It localises to the membrane. Functionally, regulates the adhesive and proliferative status of intestinal epithelial cells. Can mediate density-dependent cell proliferation. This Rattus norvegicus (Rat) protein is Transmembrane 4 L6 family member 4 (Tm4sf4).